Here is a 256-residue protein sequence, read N- to C-terminus: 5-oxoprolinase subunit A 2 (256 aa).

Belongs to the LamB/PxpA family. In terms of assembly, forms a complex composed of PxpA, PxpB and PxpC.

It catalyses the reaction 5-oxo-L-proline + ATP + 2 H2O = L-glutamate + ADP + phosphate + H(+). Its function is as follows. Catalyzes the cleavage of 5-oxoproline to form L-glutamate coupled to the hydrolysis of ATP to ADP and inorganic phosphate. This chain is 5-oxoprolinase subunit A 2, found in Bradyrhizobium diazoefficiens (strain JCM 10833 / BCRC 13528 / IAM 13628 / NBRC 14792 / USDA 110).